The chain runs to 4462 residues: Dynein axonemal heavy chain 17 (4462 aa).

A stem region spans residues 1–1808; it reads MTMAPDVRLE…FANICDAQIQ (1808 aa). TPR repeat units lie at residues 1019-1052 and 1702-1736; these read TWTD…VSKC and IWWT…QLNV. AAA stretches follow at residues 1809-2030, 2090-2311, 2417-2665, and 2763-3012; these read YSYE…VLVV, KIIK…FGFK, ELDP…IFQG, and SYNE…ERRY. ATP contacts are provided by residues 1847-1854, 2128-2135, 2455-2462, and 2801-2808; these read GPAGTGKT, GNAGSGKS, GNAGTGKS, and GVGGSGKQ. 2 coiled-coil regions span residues 3027–3086 and 3257–3309; these read YQNL…LIQV and DVAP…EKIK. The segment at 3027–3313 is stalk; sequence YQNLLAKKRT…TAEKIKCQQE (287 aa). AAA stretches follow at residues 3405 to 3632 and 3842 to 4068; these read LTDD…EIEE and IKNF…VLYN. A TPR 3 repeat occupies 4147–4182; it reads PESPYLYGLHPNAEIGFLTVTSEKLFRTVLEMQPKE.

This sequence belongs to the dynein heavy chain family. Consists of at least two heavy chains and a number of intermediate and light chains. In terms of tissue distribution, expressed in testis. Expressed in spermatozoa (at protein level). Not detected in airway epithelial cells (at protein level).

Its subcellular location is the cytoplasm. The protein resides in the cytoskeleton. The protein localises to the flagellum axoneme. In terms of biological role, force generating protein component of the outer dynein arms (ODAs) in the sperm flagellum. Produces force towards the minus ends of microtubules. Dynein has ATPase activity; the force-producing power stroke is thought to occur on release of ADP. Plays a major role in sperm motility, implicated in sperm flagellar assembly and beating. This Homo sapiens (Human) protein is Dynein axonemal heavy chain 17.